The primary structure comprises 459 residues: tRNA modification GTPase MnmE (459 aa).

(6S)-5-formyl-5,6,7,8-tetrahydrofolate-binding residues include Arg-20, Glu-85, and Arg-124. A TrmE-type G domain is found at 221-380 (GLSTVIIGRP…LEEAIQSLFY (160 aa)). Asn-231 contributes to the K(+) binding site. GTP is bound by residues 231-236 (NVGKSS), 250-256 (TDIPGTT), and 275-278 (DTAG). Residue Ser-235 participates in Mg(2+) binding. Positions 250, 252, and 255 each coordinate K(+). Thr-256 contributes to the Mg(2+) binding site. Residue Lys-459 coordinates (6S)-5-formyl-5,6,7,8-tetrahydrofolate.

It belongs to the TRAFAC class TrmE-Era-EngA-EngB-Septin-like GTPase superfamily. TrmE GTPase family. In terms of assembly, homodimer. Heterotetramer of two MnmE and two MnmG subunits. The cofactor is K(+).

It localises to the cytoplasm. Exhibits a very high intrinsic GTPase hydrolysis rate. Involved in the addition of a carboxymethylaminomethyl (cmnm) group at the wobble position (U34) of certain tRNAs, forming tRNA-cmnm(5)s(2)U34. This chain is tRNA modification GTPase MnmE, found in Bacillus velezensis (strain DSM 23117 / BGSC 10A6 / LMG 26770 / FZB42) (Bacillus amyloliquefaciens subsp. plantarum).